Consider the following 228-residue polypeptide: Ras-related protein Rab-33B (228 aa).

GTP-binding residues include Asn41, Val42, Gly43, Lys44, Thr45, Cys46, Thr60, and Thr63. Thr45 contributes to the Mg(2+) binding site. A Switch 1 motif is present at residues 54–66 (GRFPQRTEATIGV). Thr63 and Asp86 together coordinate Mg(2+). Positions 87-106 (TAGQERFRKSMVQHYYRNVH) match the Switch 2 motif. GTP is bound by residues Gly89, Asn146, Lys147, Asp149, Ala177, and Lys178. Residues Cys226 and Cys228 are each lipidated (S-geranylgeranyl cysteine). The residue at position 228 (Cys228) is a Cysteine methyl ester.

The protein belongs to the small GTPase superfamily. Rab family. Interacts (GTP- and GDP-bound forms) with ATG16L1; the complex consists of a tetramer where two RAB33B molecules bind independently one molecule of the ATG16L1 homodimer; the interaction promotes ATG12-ATG5-ATG16L1 complex recruitment to phagophores. Interacts with ATG16L2; however interaction is approximately hundred times lower than for ATG16L1. Interacts with RIC1 (via C-terminus domain); the interaction is direct with a preference for RAB33B-GTP. Interacts with RGP1. It depends on Mg(2+) as a cofactor.

It is found in the golgi apparatus membrane. The protein resides in the golgi apparatus. It localises to the cis-Golgi network. The protein localises to the preautophagosomal structure membrane. It catalyses the reaction GTP + H2O = GDP + phosphate + H(+). With respect to regulation, regulated by guanine nucleotide exchange factors (GEFs) which promote the exchange of bound GDP for free GTP. Regulated by GTPase activating proteins (GAPs) such as SGSM2 which increase the GTP hydrolysis activity. Inhibited by GDP dissociation inhibitors (GDIs). In terms of biological role, the small GTPases Rab are key regulators of intracellular membrane trafficking, from the formation of transport vesicles to their fusion with membranes. Rabs cycle between an inactive GDP-bound form and an active GTP-bound form that is able to recruit to membranes different sets of downstream effectors directly responsible for vesicle formation, movement, tethering and fusion. RAB33B acts, in coordination with RAB6A, to regulate intra-Golgi retrograde trafficking. Participates in autophagosome formation by recruiting the ATG12-ATG5-ATG16L1 complex to phagophores, probably in a nucleotide-independent manner. In Gallus gallus (Chicken), this protein is Ras-related protein Rab-33B (RAB33B).